The sequence spans 129 residues: Glycine cleavage system H protein (129 aa).

The 83-residue stretch at 24 to 106 folds into the Lipoyl-binding domain; it reads TFTVGISEHA…YGDGWLFRIK (83 aa). K65 carries the N6-lipoyllysine modification.

It belongs to the GcvH family. In terms of assembly, the glycine cleavage system is composed of four proteins: P, T, L and H. The cofactor is (R)-lipoate.

The glycine cleavage system catalyzes the degradation of glycine. The H protein shuttles the methylamine group of glycine from the P protein to the T protein. The polypeptide is Glycine cleavage system H protein (Idiomarina loihiensis (strain ATCC BAA-735 / DSM 15497 / L2-TR)).